Reading from the N-terminus, the 379-residue chain is Gonadotropin-releasing hormone II receptor (379 aa).

At 1–45 (MSGNTTLLLSNPTNVLDNSSVLNVSVSPPVLKWETPTFTTAARFR) the chain is on the extracellular side. Asn-4, Asn-18, and Asn-23 each carry an N-linked (GlcNAc...) asparagine glycan. A helical transmembrane segment spans residues 46-65 (VAATLVLFVFAAASNLSVLL). Residues 66–80 (SVTRGRGRRLASHLR) are Cytoplasmic-facing. The chain crosses the membrane as a helical span at residues 81–100 (PLIASLASADLVMTFVVMPL). Over 101-118 (DAVWNVTVQWYAGDAMCK) the chain is Extracellular. The N-linked (GlcNAc...) asparagine glycan is linked to Asn-105. Cysteines 117 and 194 form a disulfide. A helical transmembrane segment spans residues 119 to 140 (LMCFLKLFAMHSAAFILVVVSL). Over 141 to 167 (DRHHAILHPLDTLDAGRRNRRMLLTAW) the chain is Cytoplasmic. Residues 168–184 (ILSLLLASPQLFIFRAI) traverse the membrane as a helical segment. Topologically, residues 185–210 (KAKGVDFVQCATHGSFQQHWQETAYN) are extracellular. Residues 211–230 (MFHFVTLYVFPLLVMSLCYT) traverse the membrane as a helical segment. Residues 231 to 283 (RILVEINRQMHRSKDKAGEPCLRRSGTDMIPKARMKTLKMTIIIVASFVICWT) lie on the Cytoplasmic side of the membrane. A helical membrane pass occupies residues 284 to 302 (PYYLLGIWYWFQPQMLHVI). Over 303–308 (PDYVHH) the chain is Extracellular. Residues 309–328 (VFFVFGNLNTCCDPVIYGFF) form a helical membrane-spanning segment. Over 329–379 (TPSFRADLSRCFCWRNQNASAKSLPHFSGHRREVSGEAESDLGSGDQPSGQ) the chain is Cytoplasmic. Positions 355–379 (FSGHRREVSGEAESDLGSGDQPSGQ) are disordered.

It belongs to the G-protein coupled receptor 1 family. In terms of processing, phosphorylated on the C-terminal cytoplasmic tail.

The protein resides in the cell membrane. Functionally, receptor for gonadotropin releasing hormone II (GnRH II). This receptor mediates its action by association with G proteins that activate a phosphatidylinositol-calcium second messenger system. The polypeptide is Gonadotropin-releasing hormone II receptor (Clarias gariepinus (North African catfish)).